The chain runs to 190 residues: MKLLEDKILKEGILLEGNILKVDSFLNHQMDVKLFNEIGKEFKRRFEGCSINKILTIEASGIGIATIVSQYFDFCPVVFAKKVDAANMDKDTYESKVHSFTKNKTYNVRVSKKYINKGDKILLIDDFLANGCAALGLIDIIKQGGAELIGVGIAIEKGFQKGRKELEKVGAKVESLAILDKIENDKVYFK.

Residues L20 and N27 each coordinate xanthine. Position 129-133 (129-133 (ANGCA)) interacts with 5-phospho-alpha-D-ribose 1-diphosphate. K157 serves as a coordination point for xanthine.

This sequence belongs to the purine/pyrimidine phosphoribosyltransferase family. Xpt subfamily. Homodimer.

The protein resides in the cytoplasm. The catalysed reaction is XMP + diphosphate = xanthine + 5-phospho-alpha-D-ribose 1-diphosphate. It participates in purine metabolism; XMP biosynthesis via salvage pathway; XMP from xanthine: step 1/1. Functionally, converts the preformed base xanthine, a product of nucleic acid breakdown, to xanthosine 5'-monophosphate (XMP), so it can be reused for RNA or DNA synthesis. This is Xanthine phosphoribosyltransferase 2 from Clostridium botulinum (strain ATCC 19397 / Type A).